The following is a 713-amino-acid chain: Methionine--tRNA ligase (713 aa).

The 'HIGH' region signature appears at 17–27 (PYANGPIHIGH). 4 residues coordinate Zn(2+): Cys-149, Cys-152, Cys-162, and Cys-165. The 'KMSKS' region motif lies at 345–349 (KLSTS). Residue Thr-348 participates in ATP binding. The segment at 530 to 564 (VRTSTPDDDPAGAVGWEDAGAPLLPAGHPIPSGPD) is disordered. The tRNA-binding domain maps to 614-713 (DFTQLDLRAG…TEAEDGSVVR (100 aa)).

This sequence belongs to the class-I aminoacyl-tRNA synthetase family. MetG type 1 subfamily. In terms of assembly, homodimer. Requires Zn(2+) as cofactor.

It localises to the cytoplasm. It carries out the reaction tRNA(Met) + L-methionine + ATP = L-methionyl-tRNA(Met) + AMP + diphosphate. Is required not only for elongation of protein synthesis but also for the initiation of all mRNA translation through initiator tRNA(fMet) aminoacylation. This Salinibacter ruber (strain DSM 13855 / M31) protein is Methionine--tRNA ligase.